Here is a 498-residue protein sequence, read N- to C-terminus: GTPase Der (498 aa).

EngA-type G domains follow at residues 3 to 167 and 210 to 383; these read PVVA…FDDL and IKLA…KSAT. GTP contacts are provided by residues 9-16, 57-61, 119-122, 216-223, 263-267, and 328-331; these read GRPNVGKS, DTGGI, NKID, DTAGV, and NKWD. The region spanning 384–468 is the KH-like domain; the sequence is TRVGTSVLTR…PIRINFQNSE (85 aa).

It belongs to the TRAFAC class TrmE-Era-EngA-EngB-Septin-like GTPase superfamily. EngA (Der) GTPase family. As to quaternary structure, associates with the 50S ribosomal subunit.

Functionally, GTPase that plays an essential role in the late steps of ribosome biogenesis. The protein is GTPase Der of Vibrio parahaemolyticus serotype O3:K6 (strain RIMD 2210633).